A 144-amino-acid chain; its full sequence is Giant hemoglobins B chain (144 aa).

A Globin domain is found at 3–144 (VCGPLQRLKV…LNVITNGIQG (142 aa)). Residue histidine 96 participates in heme b binding.

It belongs to the globin family. Part of giant hemoglobin C1, V1 and V2. This worm has three different extracellular Hbs: two dissolved in the vascular blood, V1 (CA. 3,500 kDa) and V2 (CA. 400 kDa), and one in the coelomic fluid, C1 (CA. 400 kDa). V1 consists of four heme-containing, globin chains (B-E) and four linker chains (L1-L4). V2 consists of six globin chains (A-F) and C1 consists of five globin chains (A-E).

The protein resides in the secreted. It is found in the extracellular space. The sequence is that of Giant hemoglobins B chain from Riftia pachyptila (Vent tube worm).